A 358-amino-acid chain; its full sequence is Ion-translocating oxidoreductase complex subunit D (358 aa).

Transmembrane regions (helical) follow at residues 24–44 (ILAM…GVVL), 79–99 (LTAL…IIII), and 125–145 (IGYV…MPPI). An FMN phosphoryl threonine modification is found at Thr-186. Helical transmembrane passes span 220–240 (FAQG…FLIL), 248–268 (IPVA…FTGF), 271–291 (LSAI…FIAT), 297–317 (SITP…VYLI), and 321–341 (GNYP…VPLI).

This sequence belongs to the NqrB/RnfD family. In terms of assembly, the complex is composed of six subunits: RnfA, RnfB, RnfC, RnfD, RnfE and RnfG. The cofactor is FMN.

The protein localises to the cell inner membrane. Functionally, part of a membrane-bound complex that couples electron transfer with translocation of ions across the membrane. The chain is Ion-translocating oxidoreductase complex subunit D from Haemophilus influenzae (strain ATCC 51907 / DSM 11121 / KW20 / Rd).